Reading from the N-terminus, the 951-residue chain is Protein translocase subunit SecA 1 (951 aa).

ATP-binding positions include Q87, 105 to 109, and D525; that span reads GEGKT. Residues 911 to 942 form a disordered region; the sequence is PVVSADRSSRDPGNPASWGKVGRNEDCPCGSG. Zn(2+) contacts are provided by C937, C939, C948, and H949.

The protein belongs to the SecA family. As to quaternary structure, monomer and homodimer. Part of the essential Sec protein translocation apparatus which comprises SecA, SecYEG and auxiliary proteins SecDF-YajC and YidC. It depends on Zn(2+) as a cofactor.

The protein resides in the cell inner membrane. Its subcellular location is the cytoplasm. It carries out the reaction ATP + H2O + cellular proteinSide 1 = ADP + phosphate + cellular proteinSide 2.. In terms of biological role, part of the Sec protein translocase complex. Interacts with the SecYEG preprotein conducting channel. Has a central role in coupling the hydrolysis of ATP to the transfer of proteins into and across the cell membrane, serving both as a receptor for the preprotein-SecB complex and as an ATP-driven molecular motor driving the stepwise translocation of polypeptide chains across the membrane. This is Protein translocase subunit SecA 1 from Nitrobacter hamburgensis (strain DSM 10229 / NCIMB 13809 / X14).